Reading from the N-terminus, the 232-residue chain is MILPRPLYSGTLIRRYQRFLADVRLDDGTVVTAHCPNSGSMKGCCQPGSAVFLSLSDNPKRRLAYTWELVMADGYWAGINTGLPNRLVREGIENGTVAELLGYERIRPEVRYGTNSRVDLLLEGPGRCWVEVKNVTLVEGGTALFPDAVTERGQKHLRELMEVVRQGDRGVIFFVVQRGDGSAVAPADAIDPVYGRLLRQAVTAGVEALAYRALVTPEEIRLTERLPVLAGE.

The protein belongs to the SfsA family.

This chain is Sugar fermentation stimulation protein homolog, found in Geobacter sulfurreducens (strain ATCC 51573 / DSM 12127 / PCA).